The sequence spans 99 residues: Large ribosomal subunit protein eL21 (99 aa).

It belongs to the eukaryotic ribosomal protein eL21 family.

The protein is Large ribosomal subunit protein eL21 of Methanocella arvoryzae (strain DSM 22066 / NBRC 105507 / MRE50).